A 152-amino-acid chain; its full sequence is SKP1-like protein 12 (152 aa).

An interaction with the F-box domain of F-box proteins region spans residues 94–152; that stretch reads ILAANYLNIKSLFDLTCQTVADMIKGKTPEEIRSTFNIENDFTPEEEEAVRKENQWAFE.

This sequence belongs to the SKP1 family. Part of a SCF (SKP1-cullin-F-box) protein ligase complex. Interacts with ADO3/FKF1, COI1/FBL2, EBF1/FBL6, PP2B10, At3g61590 and At5g49610. Expressed in young seedlings, roots, leaves, floral stems, inflorescences, and siliques, with a slightly higher level in inflorescence than in other tissues.

Its subcellular location is the nucleus. Its pathway is protein modification; protein ubiquitination. Involved in ubiquitination and subsequent proteasomal degradation of target proteins. Together with CUL1, RBX1 and a F-box protein, it forms a SCF E3 ubiquitin ligase complex. The functional specificity of this complex depends on the type of F-box protein. In the SCF complex, it serves as an adapter that links the F-box protein to CUL1. Plays a role during early flowers reproductive development. This Arabidopsis thaliana (Mouse-ear cress) protein is SKP1-like protein 12 (ASK12).